A 276-amino-acid chain; its full sequence is uncharacterized protein (276 aa).

The AB hydrolase-1 domain occupies 20–137 (PVLIFIPGAN…PPINTFLPDS (118 aa)). Positions 57-76 (GESELTEPLPDSASNPDSDY) are disordered.

It belongs to the AB hydrolase superfamily.

This is an uncharacterized protein from Staphylococcus aureus (strain COL).